The chain runs to 136 residues: Ribonuclease P protein component (136 aa).

The disordered stretch occupies residues leucine 39–proline 59.

It belongs to the RnpA family. In terms of assembly, consists of a catalytic RNA component (M1 or rnpB) and a protein subunit.

The catalysed reaction is Endonucleolytic cleavage of RNA, removing 5'-extranucleotides from tRNA precursor.. Functionally, RNaseP catalyzes the removal of the 5'-leader sequence from pre-tRNA to produce the mature 5'-terminus. It can also cleave other RNA substrates such as 4.5S RNA. The protein component plays an auxiliary but essential role in vivo by binding to the 5'-leader sequence and broadening the substrate specificity of the ribozyme. In Salinispora tropica (strain ATCC BAA-916 / DSM 44818 / JCM 13857 / NBRC 105044 / CNB-440), this protein is Ribonuclease P protein component.